The sequence spans 129 residues: Small ribosomal subunit protein uS11 (129 aa).

This sequence belongs to the universal ribosomal protein uS11 family. In terms of assembly, part of the 30S ribosomal subunit. Interacts with proteins S7 and S18. Binds to IF-3.

Its function is as follows. Located on the platform of the 30S subunit, it bridges several disparate RNA helices of the 16S rRNA. Forms part of the Shine-Dalgarno cleft in the 70S ribosome. The sequence is that of Small ribosomal subunit protein uS11 from Tolumonas auensis (strain DSM 9187 / NBRC 110442 / TA 4).